A 402-amino-acid chain; its full sequence is uncharacterized protein (402 aa).

At 1–11 (MTPSNYQRTRW) the chain is on the cytoplasmic side. The helical transmembrane segment at 12-34 (LTLIGTIITQFALGSVYTWSLFN) threads the bilayer. The Periplasmic portion of the chain corresponds to 35-43 (GALSAKLDA). Residues 44-66 (PVSQVAFSFGLLSLGLAISSSVA) form a helical membrane-spanning segment. Residues 67 to 72 (GKLQER) lie on the Cytoplasmic side of the membrane. A helical membrane pass occupies residues 73 to 95 (FGVKRVTMASGILLGLGFFLTAH). The Periplasmic segment spans residues 96-99 (SDNL). The chain crosses the membrane as a helical span at residues 100–122 (MMLWLSAGVLVGLADGAGYLLTL). At 123 to 134 (SNCVKWFPERKG) the chain is on the cytoplasmic side. A helical transmembrane segment spans residues 135 to 154 (LISAFAIGSYGLGSLGFKFI). At 155–168 (DTQLLETVGLEKTF) the chain is on the periplasmic side. A helical transmembrane segment spans residues 169 to 186 (VIWGAIALLMIVFGATLM). The Cytoplasmic portion of the chain corresponds to 187 to 216 (KDAPKQEVKTSNGVVEKDYTLAESMRKPQY). Residues 217–236 (WMLAVMFLTACMSGLYVIGV) traverse the membrane as a helical segment. Over 237–250 (AKDIAQSLAHLDVV) the chain is Periplasmic. Residues 251-273 (SAANAVTVISIANLSGRLVLGIL) form a helical membrane-spanning segment. Residues 274–279 (SDKIAR) are Cytoplasmic-facing. A helical transmembrane segment spans residues 280–302 (IRVITIGQVISLVGMAALLFAPL). Residues 303–306 (NAVT) are Periplasmic-facing. The helical transmembrane segment at 307-329 (FFAAIACVAFNFGGTITVFPSLV) threads the bilayer. Residues 330-341 (SEFFGLNNLAKN) lie on the Cytoplasmic side of the membrane. A helical transmembrane segment spans residues 342–364 (YGVIYLGFGIGSICGSIIASLFG). Residues 365–367 (GFY) are Periplasmic-facing. The helical transmembrane segment at 368 to 387 (VTFYVIFALLILSLALSTTI) threads the bilayer. Over 388–402 (RQPEQKMLREAHGSL) the chain is Cytoplasmic.

It belongs to the major facilitator superfamily. In terms of assembly, interacts with BtsS and YpdA.

It localises to the cell inner membrane. Functionally, part of a nutrient-sensing regulatory network composed of the two-component regulatory systems BtsS/BtsR and YpdA/YpdB, and their respective target proteins, BtsT and YhjX. This is an uncharacterized protein from Escherichia coli (strain K12).